We begin with the raw amino-acid sequence, 196 residues long: Molybdopterin synthase catalytic subunit (196 aa).

Substrate is bound by residues 110-111 (HR), Lys126, and 133-135 (KKE). The segment at 142–196 (GGIWRANRDGAVGERVDEDEEKKKPDMGPHGPILRPSRPGERGHGPVVRNHQLGS) is disordered. Basic and acidic residues predominate over residues 147–168 (ANRDGAVGERVDEDEEKKKPDM).

This sequence belongs to the MoaE family. MOCS2B subfamily. Heterotetramer; composed of 2 small (MOCS2A) and 2 large (MOCS2B) subunits.

The protein resides in the cytoplasm. It catalyses the reaction 2 [molybdopterin-synthase sulfur-carrier protein]-C-terminal-Gly-aminoethanethioate + cyclic pyranopterin phosphate + H2O = molybdopterin + 2 [molybdopterin-synthase sulfur-carrier protein]-C-terminal Gly-Gly + 2 H(+). Its pathway is cofactor biosynthesis; molybdopterin biosynthesis. Catalytic subunit of the molybdopterin synthase complex, a complex that catalyzes the conversion of precursor Z into molybdopterin. Acts by mediating the incorporation of 2 sulfur atoms from thiocarboxylated MOCS2A into precursor Z to generate a dithiolene group. This is Molybdopterin synthase catalytic subunit from Sclerotinia sclerotiorum (strain ATCC 18683 / 1980 / Ss-1) (White mold).